A 138-amino-acid polypeptide reads, in one-letter code: Phosphoribosyl-AMP cyclohydrolase (138 aa).

Aspartate 85 is a binding site for Mg(2+). Residue cysteine 86 coordinates Zn(2+). Positions 87 and 89 each coordinate Mg(2+). Cysteine 102 and cysteine 109 together coordinate Zn(2+).

Belongs to the PRA-CH family. Homodimer. It depends on Mg(2+) as a cofactor. Zn(2+) is required as a cofactor.

The protein resides in the cytoplasm. The catalysed reaction is 1-(5-phospho-beta-D-ribosyl)-5'-AMP + H2O = 1-(5-phospho-beta-D-ribosyl)-5-[(5-phospho-beta-D-ribosylamino)methylideneamino]imidazole-4-carboxamide. It functions in the pathway amino-acid biosynthesis; L-histidine biosynthesis; L-histidine from 5-phospho-alpha-D-ribose 1-diphosphate: step 3/9. Its function is as follows. Catalyzes the hydrolysis of the adenine ring of phosphoribosyl-AMP. This Methanothermobacter thermautotrophicus (strain ATCC 29096 / DSM 1053 / JCM 10044 / NBRC 100330 / Delta H) (Methanobacterium thermoautotrophicum) protein is Phosphoribosyl-AMP cyclohydrolase.